Reading from the N-terminus, the 135-residue chain is Ribonuclease VapC9 (135 aa).

The 104-residue stretch at 15–118 (VVDTNVLMYV…LKRKAKQRGI (104 aa)) folds into the PINc domain. Mg(2+)-binding residues include Asp17 and Asp88.

The protein belongs to the PINc/VapC protein family. In terms of assembly, dimer. The cofactor is Mg(2+).

Toxic component of a type II toxin-antitoxin (TA) system. An RNase. The protein is Ribonuclease VapC9 of Archaeoglobus fulgidus (strain ATCC 49558 / DSM 4304 / JCM 9628 / NBRC 100126 / VC-16).